The chain runs to 172 residues: Large ribosomal subunit protein uL10 (172 aa).

The protein belongs to the universal ribosomal protein uL10 family. Part of the ribosomal stalk of the 50S ribosomal subunit. The N-terminus interacts with L11 and the large rRNA to form the base of the stalk. The C-terminus forms an elongated spine to which 3 L12 dimers bind in a sequential fashion forming a heptameric L10(L12)2(L12)2(L12)2 complex.

Its function is as follows. Forms part of the ribosomal stalk, playing a central role in the interaction of the ribosome with GTP-bound translation factors. The protein is Large ribosomal subunit protein uL10 of Agrobacterium fabrum (strain C58 / ATCC 33970) (Agrobacterium tumefaciens (strain C58)).